We begin with the raw amino-acid sequence, 997 residues long: Mannuronan C5-epimerase AlgE5 (997 aa).

7 PbH1 repeats span residues 133–155 (DRDV…DPHE), 157–179 (TINL…VADF), 180–202 (QIGG…NIVT), 204–226 (TNDF…VIQR), 257–279 (AHDV…RVYG), 280–315 (AEDV…GVSG), and 320–359 (TTGT…SVSN). Hemolysin-type calcium-binding repeat units lie at residues 388-403 (GTTG…AHET), 406-422 (GLDG…NDIL), 424-439 (GGAG…GADL), 557-573 (GHAG…DDIL), 574-590 (VGGA…GADL), 695-709 (GSAG…AADE), 712-729 (HGGA…ADVF), 828-839 (GSDGNDTLDGGS), 846-862 (GGAG…NDIL), and 864-880 (GGAG…SDIF).

Belongs to the D-mannuronate C5-epimerase family. It depends on Ca(2+) as a cofactor.

The protein localises to the secreted. It catalyses the reaction [(1-&gt;4)-beta-D-mannuronosyl](n) = [alginate](n). The protein operates within glycan biosynthesis; alginate biosynthesis. With respect to regulation, inhibited by zinc. Functionally, converts beta-D-mannuronic acid (M) to alpha-L-guluronic acid (G), producing a polymer with gel-forming capacity, required for the formation of the cyst coat. The chain is Mannuronan C5-epimerase AlgE5 from Azotobacter vinelandii.